The sequence spans 700 residues: AP-1-like transcription factor yap1 (700 aa).

2 disordered regions span residues 17–185 (SPGH…KDLE) and 228–296 (MPVN…VSLR). Residues 34–41 (MPVPGRDT) carry the Bipartite nuclear localization signal motif. Over residues 47–59 (PSVSNGSQPSAHQ) the composition is skewed to polar residues. The short motif at 67–74 (SPTPEMPP) is the Bipartite nuclear localization signal element. The span at 103–112 (LDDDDDDASD) shows a compositional bias: acidic residues. The segment covering 127 to 138 (AGRAAAASASGS) has biased composition (low complexity). Basic and acidic residues predominate over residues 150–185 (GDGKRELSKSERRKEQNRAAQKAFRERREAKVKDLE). Residues 156–219 (LSKSERRKEQ…KRLQEENVAL (64 aa)) enclose the bZIP domain. Positions 158–182 (KSERRKEQNRAAQKAFRERREAKVK) are basic motif. Positions 184 to 191 (LEDKVAEL) are leucine-zipper. 2 transcription activation regions span residues 213–400 (QEEN…QPDS) and 452–577 (LGAT…GRGN). Positions 231-244 (NSRNSPNSNNGSFS) are enriched in low complexity. Positions 280 to 296 (SANTISDNSSESLVSLR) are enriched in polar residues. Residues 306-318 (FSDHFNTYALGVV) are n-CRD. Disordered stretches follow at residues 320 to 359 (VPPPSSSSQPTQKYPSASNGQQSISSNSNSSNVISPPSAD) and 542 to 609 (NYLN…KATT). Composition is skewed to low complexity over residues 335 to 358 (SASNGQQSISSNSNSSNVISPPSA) and 542 to 573 (NYLNMSPSPMMPLSNSQSPQSSDSRSNTNVSS). A compositionally biased stretch (polar residues) spans 589–607 (MGSSRTSVSHDSTDLQGKA). The segment at 642–675 (PSELWMRFGMQHENSTEHLLIDDLCDQMRAKATC) is c-CRD. The Nuclear export signal motif lies at 660-667 (LLIDDLCD). An intrachain disulfide couples C666 to C675.

It belongs to the bZIP family. YAP subfamily. Post-translationally, depending on the oxidative stress inducing agent, yap1 can undergo two distinct conformational changes, both involving disulfide bond formation, and both masking the nuclear export signal, thus abolishing nuclear export.

The protein resides in the nucleus. The protein localises to the cytoplasm. In terms of biological role, transcription activator involved in oxidative stress response and redox homeostasis. Regulates the transcription of genes encoding antioxidant enzymes and components of the cellular thiol-reducing pathways. Involved in antifungal resistance to fluconazole. The sequence is that of AP-1-like transcription factor yap1 from Cryptococcus neoformans var. grubii serotype A (strain H99 / ATCC 208821 / CBS 10515 / FGSC 9487) (Filobasidiella neoformans var. grubii).